Consider the following 329-residue polypeptide: Ketol-acid reductoisomerase (NADP(+)) (329 aa).

In terms of domain architecture, KARI N-terminal Rossmann spans 2-182; the sequence is TQLFYDTDAD…GGTRAGILET (181 aa). Residues 25-28, serine 51, serine 53, and 83-86 contribute to the NADP(+) site; these read YGSQ and DEFQ. The active site involves histidine 108. Glycine 134 is a binding site for NADP(+). The 146-residue stretch at 183–328 folds into the KARI C-terminal knotted domain; the sequence is NFKEETETDL…KGLRAMFSWL (146 aa). Residues aspartate 191, glutamate 195, glutamate 227, and glutamate 231 each coordinate Mg(2+). Serine 252 provides a ligand contact to substrate.

The protein belongs to the ketol-acid reductoisomerase family. The cofactor is Mg(2+).

It catalyses the reaction (2R)-2,3-dihydroxy-3-methylbutanoate + NADP(+) = (2S)-2-acetolactate + NADPH + H(+). The catalysed reaction is (2R,3R)-2,3-dihydroxy-3-methylpentanoate + NADP(+) = (S)-2-ethyl-2-hydroxy-3-oxobutanoate + NADPH + H(+). Its pathway is amino-acid biosynthesis; L-isoleucine biosynthesis; L-isoleucine from 2-oxobutanoate: step 2/4. It functions in the pathway amino-acid biosynthesis; L-valine biosynthesis; L-valine from pyruvate: step 2/4. Functionally, involved in the biosynthesis of branched-chain amino acids (BCAA). Catalyzes an alkyl-migration followed by a ketol-acid reduction of (S)-2-acetolactate (S2AL) to yield (R)-2,3-dihydroxy-isovalerate. In the isomerase reaction, S2AL is rearranged via a Mg-dependent methyl migration to produce 3-hydroxy-3-methyl-2-ketobutyrate (HMKB). In the reductase reaction, this 2-ketoacid undergoes a metal-dependent reduction by NADPH to yield (R)-2,3-dihydroxy-isovalerate. In Prochlorococcus marinus (strain MIT 9515), this protein is Ketol-acid reductoisomerase (NADP(+)).